The sequence spans 331 residues: Adenosine deaminase (331 aa).

Residues H12 and H14 each contribute to the Zn(2+) site. H14, D16, and G170 together coordinate substrate. H197 contacts Zn(2+). E200 acts as the Proton donor in catalysis. Residue D278 participates in Zn(2+) binding. D279 is a substrate binding site.

The protein belongs to the metallo-dependent hydrolases superfamily. Adenosine and AMP deaminases family. Adenosine deaminase subfamily. Zn(2+) serves as cofactor.

It catalyses the reaction adenosine + H2O + H(+) = inosine + NH4(+). The catalysed reaction is 2'-deoxyadenosine + H2O + H(+) = 2'-deoxyinosine + NH4(+). In terms of biological role, catalyzes the hydrolytic deamination of adenosine and 2-deoxyadenosine. This Shewanella putrefaciens (strain CN-32 / ATCC BAA-453) protein is Adenosine deaminase.